The primary structure comprises 458 residues: Retinoic acid receptor alpha-B (458 aa).

The interval M1 to V79 is modulating. The tract at residues H48–P75 is disordered. The span at W49 to E64 shows a compositional bias: polar residues. The nuclear receptor DNA-binding region spans Y80–N155. 2 consecutive NR C4-type zinc fingers follow at residues C83–C103 and C119–C138. A hinge region spans residues D156–P177. Positions D178–S412 constitute an NR LBD domain. A 9aaTAD motif is present at residues P403–N411. The disordered stretch occupies residues N411–P458. Gly residues predominate over residues L415–A435. A compositionally biased stretch (low complexity) spans P436–P458.

This sequence belongs to the nuclear hormone receptor family. NR1 subfamily. Heterodimer; with an rxr molecule. Binds DNA preferentially as a rar/rxr heterodimer. As to expression, in the embryo, zygotic expression largely overlaps that of raraa, with high levels in hindbrain, lateral plate mesoderm (LPM) and tail bud, but in later stages rarab is expressed more broadly in the brain, pectoral fin bud and pharyngeal arches.

The protein resides in the nucleus. In terms of biological role, receptor for retinoic acid. Retinoic acid receptors bind as heterodimers to their target response elements in response to their ligands, all-trans or 9-cis retinoic acid, and regulate gene expression in various biological processes. The rar/rxr heterodimers bind to the retinoic acid response elements (RARE) composed of tandem 5'-AGGTCA-3' sites known as DR1-DR5. Required for hindbrain development and, in lateral plate mesoderm, for specification of the pectoral fins. This Danio rerio (Zebrafish) protein is Retinoic acid receptor alpha-B.